Reading from the N-terminus, the 256-residue chain is Triosephosphate isomerase (256 aa).

Residue 9–11 participates in substrate binding; that stretch reads NWK. The active-site Electrophile is H97. E169 functions as the Proton acceptor in the catalytic mechanism. Residues G175, S214, and 235 to 236 contribute to the substrate site; that span reads GG.

It belongs to the triosephosphate isomerase family. As to quaternary structure, homodimer.

The protein resides in the cytoplasm. It carries out the reaction D-glyceraldehyde 3-phosphate = dihydroxyacetone phosphate. It participates in carbohydrate biosynthesis; gluconeogenesis. The protein operates within carbohydrate degradation; glycolysis; D-glyceraldehyde 3-phosphate from glycerone phosphate: step 1/1. Involved in the gluconeogenesis. Catalyzes stereospecifically the conversion of dihydroxyacetone phosphate (DHAP) to D-glyceraldehyde-3-phosphate (G3P). The sequence is that of Triosephosphate isomerase from Moritella marina (Vibrio marinus).